We begin with the raw amino-acid sequence, 277 residues long: MSNVEQPFMQGIDDGWNLKNYLNIQSTSLCLDKLCNIYTQGQDENEDAKELQAIKIKIEWCKDTSVLLSSICVMLLDSIHDFLVQQGKITKESISKRDYSHEITIFNFKYAQQEMQNEKLYHFAKLLEPALESLKVTNNHITHATIVGQVSGSEHNLSTAIEQVDVIVNYFYDSSEKFLELGNKVQTLGKAKNKKHWLGVYQSFGKASVDQIQKQLECYNVRMMELNKTDENNESAICESQASSKEDERSDKTTSSSKKKSFTKLISNSRLNLWNKQ.

The disordered stretch occupies residues 232–262; that stretch reads NNESAICESQASSKEDERSDKTTSSSKKKSF. A compositionally biased stretch (polar residues) spans 234–243; sequence ESAICESQAS.

It localises to the cytoplasm. The protein resides in the nucleus. This is an uncharacterized protein from Schizosaccharomyces pombe (strain 972 / ATCC 24843) (Fission yeast).